The primary structure comprises 594 residues: Arrestin domain-containing protein C584.15c (594 aa).

The span at 368-398 (NPQLQSGFTTPNLSRRNSSDFGPNSPVNIHS) shows a compositional bias: polar residues. Disordered regions lie at residues 368–417 (NPQL…NSNA) and 531–594 (EATR…RGVR). Low complexity predominate over residues 404–417 (SGQQPSSPASNSNA). Residues 534-552 (RPSSPTESVEIPSNTTTIA) show a composition bias toward polar residues. Residues 565-574 (PSTPAPPLPS) show a composition bias toward pro residues. A Phosphoserine modification is found at serine 584.

The protein belongs to the arrestin family.

The sequence is that of Arrestin domain-containing protein C584.15c from Schizosaccharomyces pombe (strain 972 / ATCC 24843) (Fission yeast).